The sequence spans 152 residues: Serglycin (152 aa).

The signal sequence occupies residues 1 to 25 (MQVPVGSRLVLALAFVLVWGSSVQG). Positions 26–74 (YPARRARYQWVRCKPNGFFANCIEEKGPQFDLIDESNNIGPPMNNPVLM) are cleaved as a propeptide — activation peptide. A disulfide bridge links cysteine 38 with cysteine 47. The segment at 66 to 115 (PPMNNPVLMEGPSKDFISNYDDYGSGSGSGSGSGSGSGSGSGSGFLGDME) is disordered. Tandem repeats lie at residues 89–90 (GS), 91–92 (GS), 93–94 (GS), 95–96 (GS), 97–98 (GS), 99–100 (GS), 101–102 (GS), 103–104 (GS), 105–106 (GS), and 107–108 (GS). Positions 89 to 108 (GSGSGSGSGSGSGSGSGSGS) are 10 X 2 AA tandem repeats of G-S. Residues 90 to 110 (SGSGSGSGSGSGSGSGSGSGF) show a composition bias toward gly residues. O-linked (Xyl...) (glycosaminoglycan) serine glycans are attached at residues serine 92 and serine 94. O-linked (Xyl...) (glycosaminoglycan) serine glycans are attached at residues serine 98, serine 100, serine 102, serine 104, serine 106, and serine 108.

It belongs to the serglycin family. Binds to activated CD44 and to GZMB. In terms of processing, O-glycosylated; contains chondroitin sulfate and heparan sulfate.

Its subcellular location is the cytoplasmic granule. It localises to the cytolytic granule. The protein localises to the secreted. The protein resides in the extracellular space. It is found in the golgi apparatus. Functionally, plays a role in formation of mast cell secretory granules and mediates storage of various compounds in secretory vesicles. Required for storage of some proteases in both connective tissue and mucosal mast cells and for storage of granzyme B in T-lymphocytes. Plays a role in localizing neutrophil elastase in azurophil granules of neutrophils. Mediates processing of MMP2. Plays a role in cytotoxic cell granule-mediated apoptosis by forming a complex with granzyme B which is delivered to cells by perforin to induce apoptosis. Regulates the secretion of TNF-alpha and may also regulate protease secretion. Inhibits bone mineralization. In Mus musculus (Mouse), this protein is Serglycin (Srgn).